The chain runs to 100 residues: Protein Tat (100 aa).

The interaction with human CREBBP stretch occupies residues 1 to 24 (MDPIDPDLEPWKHPGSQPRTVCNN). The interval 1–48 (MDPIDPDLEPWKHPGSQPRTVCNNCYCKACCYHCIYCFTKKGLGISYG) is transactivation. Cys22, Cys25, and Cys27 together coordinate Zn(2+). The cysteine-rich stretch occupies residues 22-37 (CNNCYCKACCYHCIYC). N6-acetyllysine; by host PCAF is present on Lys28. Residues Cys30, His33, Cys34, and Cys37 each contribute to the Zn(2+) site. The core stretch occupies residues 38 to 48 (FTKKGLGISYG). Positions 48–58 (GRKKRTTRRRT) are enriched in basic residues. A disordered region spans residues 48–100 (GRKKRTTRRRTAPAGSKNNQDSIPKQPLSQSRGNKEGSEKSTKEVASKTEADQ). Positions 49–57 (RKKRTTRRR) match the Nuclear localization signal, RNA-binding (TAR), and protein transduction motif. The interaction with the host capping enzyme RNGTT stretch occupies residues 49-87 (RKKRTTRRRTAPAGSKNNQDSIPKQPLSQSRGNKEGSEK). N6-acetyllysine; by host EP300 and GCN5L2 is present on residues Lys50 and Lys51. Arg52 is subject to Asymmetric dimethylarginine; by host PRMT6. Residues 63–79 (SKNNQDSIPKQPLSQSR) show a composition bias toward polar residues. Lys72 is covalently cross-linked (Glycyl lysine isopeptide (Lys-Gly) (interchain with G-Cter in ubiquitin)). Over residues 80–100 (GNKEGSEKSTKEVASKTEADQ) the composition is skewed to basic and acidic residues.

This sequence belongs to the lentiviruses Tat family. Interacts with host CCNT1. Associates with the P-TEFb complex composed at least of Tat, P-TEFb (CDK9 and CCNT1), TAR RNA, RNA Pol II. Recruits the HATs CREBBP, TAF1/TFIID, EP300, PCAF and GCN5L2. Interacts with host KAT5/Tip60; this interaction targets the latter to degradation. Interacts with the host deacetylase SIRT1. Interacts with host capping enzyme RNGTT; this interaction stimulates RNGTT. Binds to host KDR, and to the host integrins ITGAV/ITGB3 and ITGA5/ITGB1. Interacts with host KPNB1/importin beta-1 without previous binding to KPNA1/importin alpha-1. Interacts with EIF2AK2. Interacts with host nucleosome assembly protein NAP1L1; this interaction may be required for the transport of Tat within the nucleus, since the two proteins interact at the nuclear rim. Interacts with host C1QBP/SF2P32; this interaction involves lysine-acetylated Tat. Interacts with the host chemokine receptors CCR2, CCR3 and CXCR4. Interacts with host DPP4/CD26; this interaction may trigger an anti-proliferative effect. Interacts with host LDLR. Interacts with the host extracellular matrix metalloproteinase MMP1. Interacts with host PRMT6; this interaction mediates Tat's methylation. Interacts with, and is ubiquitinated by MDM2/Hdm2. Interacts with host PSMC3 and HTATIP2. Interacts with STAB1; this interaction may overcome SATB1-mediated repression of IL2 and IL2RA (interleukin) in T cells by binding to the same domain than HDAC1. Interacts (when acetylated) with human CDK13, thereby increasing HIV-1 mRNA splicing and promoting the production of the doubly spliced HIV-1 protein Nef. Interacts with host TBP; this interaction modulates the activity of transcriptional pre-initiation complex. Interacts with host RELA. Asymmetrical arginine methylation by host PRMT6 seems to diminish the transactivation capacity of Tat and affects the interaction with host CCNT1. In terms of processing, acetylation by EP300, CREBBP, GCN5L2/GCN5 and PCAF regulates the transactivation activity of Tat. EP300-mediated acetylation of Lys-50 promotes dissociation of Tat from the TAR RNA through the competitive binding to PCAF's bromodomain. In addition, the non-acetylated Tat's N-terminus can also interact with PCAF. PCAF-mediated acetylation of Lys-28 enhances Tat's binding to CCNT1. Lys-50 is deacetylated by SIRT1. Post-translationally, polyubiquitination by host MDM2 does not target Tat to degradation, but activates its transactivation function and fosters interaction with CCNT1 and TAR RNA. Phosphorylated by EIF2AK2 on serine and threonine residues adjacent to the basic region important for TAR RNA binding and function. Phosphorylation of Tat by EIF2AK2 is dependent on the prior activation of EIF2AK2 by dsRNA.

The protein localises to the host nucleus. The protein resides in the host nucleolus. It is found in the host cytoplasm. Its subcellular location is the secreted. Functionally, transcriptional activator that increases RNA Pol II processivity, thereby increasing the level of full-length viral transcripts. Recognizes a hairpin structure at the 5'-LTR of the nascent viral mRNAs referred to as the transactivation responsive RNA element (TAR) and recruits the cyclin T1-CDK9 complex (P-TEFb complex) that will in turn hyperphosphorylate the RNA polymerase II to allow efficient elongation. The CDK9 component of P-TEFb and other Tat-activated kinases hyperphosphorylate the C-terminus of RNA Pol II that becomes stabilized and much more processive. Other factors such as HTATSF1/Tat-SF1, SUPT5H/SPT5, and HTATIP2 are also important for Tat's function. Besides its effect on RNA Pol II processivity, Tat induces chromatin remodeling of proviral genes by recruiting the histone acetyltransferases (HATs) CREBBP, EP300 and PCAF to the chromatin. This also contributes to the increase in proviral transcription rate, especially when the provirus integrates in transcriptionally silent region of the host genome. To ensure maximal activation of the LTR, Tat mediates nuclear translocation of NF-kappa-B by interacting with host RELA. Through its interaction with host TBP, Tat may also modulate transcription initiation. Tat can reactivate a latently infected cell by penetrating in it and transactivating its LTR promoter. In the cytoplasm, Tat is thought to act as a translational activator of HIV-1 mRNAs. Extracellular circulating Tat can be endocytosed by surrounding uninfected cells via the binding to several surface receptors such as CD26, CXCR4, heparan sulfate proteoglycans (HSPG) or LDLR. Neurons are rarely infected, but they internalize Tat via their LDLR. Through its interaction with nuclear HATs, Tat is potentially able to control the acetylation-dependent cellular gene expression. Modulates the expression of many cellular genes involved in cell survival, proliferation or in coding for cytokines or cytokine receptors. Tat plays a role in T-cell and neurons apoptosis. Tat induced neurotoxicity and apoptosis probably contribute to neuroAIDS. Circulating Tat also acts as a chemokine-like and/or growth factor-like molecule that binds to specific receptors on the surface of the cells, affecting many cellular pathways. In the vascular system, Tat binds to ITGAV/ITGB3 and ITGA5/ITGB1 integrins dimers at the surface of endothelial cells and competes with bFGF for heparin-binding sites, leading to an excess of soluble bFGF. The chain is Protein Tat from Pan (chimpanzees).